The primary structure comprises 279 residues: uncharacterized protein (279 aa).

An HTH lysR-type domain is found at isoleucine 14–threonine 71. The H-T-H motif DNA-binding region spans glutamine 31–lysine 50.

This sequence belongs to the LysR transcriptional regulatory family.

This is an uncharacterized protein from Methanocaldococcus jannaschii (strain ATCC 43067 / DSM 2661 / JAL-1 / JCM 10045 / NBRC 100440) (Methanococcus jannaschii).